The chain runs to 219 residues: 7-cyano-7-deazaguanine synthase (219 aa).

An ATP-binding site is contributed by 10–20; that stretch reads FSGGQDSTTCL. The Zn(2+) site is built by C188, C196, C199, and C202.

The protein belongs to the QueC family. Zn(2+) serves as cofactor.

The catalysed reaction is 7-carboxy-7-deazaguanine + NH4(+) + ATP = 7-cyano-7-deazaguanine + ADP + phosphate + H2O + H(+). It functions in the pathway purine metabolism; 7-cyano-7-deazaguanine biosynthesis. In terms of biological role, catalyzes the ATP-dependent conversion of 7-carboxy-7-deazaguanine (CDG) to 7-cyano-7-deazaguanine (preQ(0)). This Neisseria meningitidis serogroup A / serotype 4A (strain DSM 15465 / Z2491) protein is 7-cyano-7-deazaguanine synthase.